Consider the following 74-residue polypeptide: Heat shock factor-binding protein 1-like protein 1 (74 aa).

A coiled-coil region spans residues 12–65 (RALRDAAENLFQELQEHFQALTATLNLRMEEMGNRIEDLQKNVKDLMVQAGIEN).

This sequence belongs to the HSBP1 family.

The protein is Heat shock factor-binding protein 1-like protein 1 (HSBP1L1) of Homo sapiens (Human).